The chain runs to 260 residues: tRNA pseudouridine synthase B (260 aa).

Substrate is bound at residue His-44. The active-site Nucleophile is Asp-49. The substrate site is built by Tyr-77, Tyr-180, and Leu-201.

This sequence belongs to the pseudouridine synthase TruB family. Type 1 subfamily.

The enzyme catalyses uridine(55) in tRNA = pseudouridine(55) in tRNA. Its function is as follows. Responsible for synthesis of pseudouridine from uracil-55 in the psi GC loop of transfer RNAs. In Blochmanniella pennsylvanica (strain BPEN), this protein is tRNA pseudouridine synthase B.